A 158-amino-acid polypeptide reads, in one-letter code: Small ribosomal subunit protein uS15 (158 aa).

Positions 1 to 18 are enriched in basic residues; that stretch reads MARMHARKRGKSGSKRPP. Residues 1 to 21 are disordered; that stretch reads MARMHARKRGKSGSKRPPRTA.

The protein belongs to the universal ribosomal protein uS15 family. Part of the 30S ribosomal subunit.

This Pyrococcus furiosus (strain ATCC 43587 / DSM 3638 / JCM 8422 / Vc1) protein is Small ribosomal subunit protein uS15.